The sequence spans 300 residues: Ribonuclease HIII (300 aa).

The 218-residue stretch at 83-300 folds into the RNase H type-2 domain; that stretch reads IPIIGSDEVG…THKAQALLTK (218 aa). A divalent metal cation contacts are provided by aspartate 89, glutamate 90, and aspartate 194.

This sequence belongs to the RNase HII family. RnhC subfamily. The cofactor is Mn(2+). Mg(2+) is required as a cofactor.

The protein resides in the cytoplasm. It catalyses the reaction Endonucleolytic cleavage to 5'-phosphomonoester.. Its function is as follows. Endonuclease that specifically degrades the RNA of RNA-DNA hybrids. In Streptococcus pyogenes serotype M49 (strain NZ131), this protein is Ribonuclease HIII.